Consider the following 110-residue polypeptide: UPF0060 membrane protein Bpet0062 (110 aa).

The next 4 helical transmembrane spans lie at 7–27 (LGLF…PYLW), 33–53 (SAWL…LLTL), 63–83 (AAYG…VDGV), and 86–106 (ATTD…IMAG).

Belongs to the UPF0060 family.

It is found in the cell inner membrane. This is UPF0060 membrane protein Bpet0062 from Bordetella petrii (strain ATCC BAA-461 / DSM 12804 / CCUG 43448).